Consider the following 984-residue polypeptide: Glycine dehydrogenase (decarboxylating) (984 aa).

Lys-702 bears the N6-(pyridoxal phosphate)lysine mark.

It belongs to the GcvP family. In terms of assembly, the glycine cleavage system is composed of four proteins: P, T, L and H. Pyridoxal 5'-phosphate is required as a cofactor.

It carries out the reaction N(6)-[(R)-lipoyl]-L-lysyl-[glycine-cleavage complex H protein] + glycine + H(+) = N(6)-[(R)-S(8)-aminomethyldihydrolipoyl]-L-lysyl-[glycine-cleavage complex H protein] + CO2. Functionally, the glycine cleavage system catalyzes the degradation of glycine. The P protein binds the alpha-amino group of glycine through its pyridoxal phosphate cofactor; CO(2) is released and the remaining methylamine moiety is then transferred to the lipoamide cofactor of the H protein. In Xanthomonas oryzae pv. oryzae (strain MAFF 311018), this protein is Glycine dehydrogenase (decarboxylating).